The sequence spans 453 residues: Glucose N-acetyltransferase 1-B (453 aa).

At 1–8 (MLKRKVRY) the chain is on the cytoplasmic side. Residues 9 to 29 (LLLIVVVFTGIILSVEAIMRF) traverse the membrane as a helical; Signal-anchor for type II membrane protein segment. The Lumenal portion of the chain corresponds to 30–453 (QLNKNVDYYL…LESRAICQVN (424 aa)). N-linked (GlcNAc...) asparagine glycosylation is found at asparagine 108, asparagine 126, and asparagine 176. The short motif at 187-189 (DND) is the DXD element.

The protein belongs to the GNT1 family.

It is found in the golgi apparatus membrane. The protein resides in the vacuole membrane. Its function is as follows. N-acetylglucosaminyltransferase involved in the Golgi-specific modification of N-linked glycans. In Kluyveromyces lactis (strain ATCC 8585 / CBS 2359 / DSM 70799 / NBRC 1267 / NRRL Y-1140 / WM37) (Yeast), this protein is Glucose N-acetyltransferase 1-B (GNT1-B).